Reading from the N-terminus, the 211-residue chain is Large ribosomal subunit protein uL3 (211 aa).

Positions 130 to 154 (RGPMAHGSKFHRHQGSNGSATTPGR) are disordered.

Belongs to the universal ribosomal protein uL3 family. Part of the 50S ribosomal subunit. Forms a cluster with proteins L14 and L19.

In terms of biological role, one of the primary rRNA binding proteins, it binds directly near the 3'-end of the 23S rRNA, where it nucleates assembly of the 50S subunit. In Lachnospira eligens (strain ATCC 27750 / DSM 3376 / VPI C15-48 / C15-B4) (Eubacterium eligens), this protein is Large ribosomal subunit protein uL3.